Consider the following 331-residue polypeptide: MARMYYDADANLDLLNGKTVAIIGYGSQGHAHALNLKDSGINVVIGLYAGSKSTAKAEAEGLKVLPVAEAAKVADWIMILLPDDVQKSVYTKDILPNLQAGNVLSFAHGFNINFGQIVPPADVDVVMVAPKGPGHLVRRTYEQGQGVPALFAVYQDATGQARDLAMAYAKGIGGTRGGILETTFREETETDLFGEQAVLCGGLSALIKAGFETLVEAGYQPELAYFECLHEVKLIVDLVVEGGLAKMRDSISTTAEYGDYVSGPRVITAETKAAMKEILTEIQTGEFARNFILENQSGQAQFTAIRRREAEHPIEVVGKDLRAMFSWLKES.

The 181-residue stretch at 2 to 182 (ARMYYDADAN…GGTRGGILET (181 aa)) folds into the KARI N-terminal Rossmann domain. NADP(+) contacts are provided by residues 25–28 (YGSQ), serine 51, serine 53, and 83–86 (DDVQ). The active site involves histidine 108. Glycine 134 contacts NADP(+). Positions 183–328 (TFREETETDL…KDLRAMFSWL (146 aa)) constitute a KARI C-terminal knotted domain. Residues aspartate 191, glutamate 195, glutamate 227, and glutamate 231 each contribute to the Mg(2+) site. Serine 252 contributes to the substrate binding site.

Belongs to the ketol-acid reductoisomerase family. The cofactor is Mg(2+).

It catalyses the reaction (2R)-2,3-dihydroxy-3-methylbutanoate + NADP(+) = (2S)-2-acetolactate + NADPH + H(+). It carries out the reaction (2R,3R)-2,3-dihydroxy-3-methylpentanoate + NADP(+) = (S)-2-ethyl-2-hydroxy-3-oxobutanoate + NADPH + H(+). It functions in the pathway amino-acid biosynthesis; L-isoleucine biosynthesis; L-isoleucine from 2-oxobutanoate: step 2/4. The protein operates within amino-acid biosynthesis; L-valine biosynthesis; L-valine from pyruvate: step 2/4. Involved in the biosynthesis of branched-chain amino acids (BCAA). Catalyzes an alkyl-migration followed by a ketol-acid reduction of (S)-2-acetolactate (S2AL) to yield (R)-2,3-dihydroxy-isovalerate. In the isomerase reaction, S2AL is rearranged via a Mg-dependent methyl migration to produce 3-hydroxy-3-methyl-2-ketobutyrate (HMKB). In the reductase reaction, this 2-ketoacid undergoes a metal-dependent reduction by NADPH to yield (R)-2,3-dihydroxy-isovalerate. The sequence is that of Ketol-acid reductoisomerase (NADP(+)) from Picosynechococcus sp. (strain ATCC 27264 / PCC 7002 / PR-6) (Agmenellum quadruplicatum).